The primary structure comprises 269 residues: Indole-3-glycerol phosphate synthase (269 aa).

It belongs to the TrpC family.

The catalysed reaction is 1-(2-carboxyphenylamino)-1-deoxy-D-ribulose 5-phosphate + H(+) = (1S,2R)-1-C-(indol-3-yl)glycerol 3-phosphate + CO2 + H2O. It participates in amino-acid biosynthesis; L-tryptophan biosynthesis; L-tryptophan from chorismate: step 4/5. In Streptomyces griseus subsp. griseus (strain JCM 4626 / CBS 651.72 / NBRC 13350 / KCC S-0626 / ISP 5235), this protein is Indole-3-glycerol phosphate synthase.